Consider the following 369-residue polypeptide: uncharacterized protein (369 aa).

An N6-(pyridoxal phosphate)lysine modification is found at Lys184.

It belongs to the class-V pyridoxal-phosphate-dependent aminotransferase family. It depends on pyridoxal 5'-phosphate as a cofactor.

This is an uncharacterized protein from Helicobacter pylori (strain J99 / ATCC 700824) (Campylobacter pylori J99).